The chain runs to 287 residues: Probable aquaporin PIP1-5 (287 aa).

M1 is subject to N-acetylmethionine. Residues 1–34 (MEGKEEDVNVGANKFPERQPIGTAAQTESKDYKE) are disordered. At 1–55 (MEGKEEDVNVGANKFPERQPIGTAAQTESKDYKEPPPAPFFEPGELKSWSFYRAG) the chain is on the cytoplasmic side. A helical membrane pass occupies residues 56 to 76 (IAEFIATFLFLYVTVLTVMGV). The Extracellular segment spans residues 77-92 (KRAPNMCASVGIQGIA). A helical membrane pass occupies residues 93–113 (WAFGGMIFALVYCTAGISGGH). The Cytoplasmic segment spans residues 114 to 133 (INPAVTFGLFLARKLSLTRA). An NPA 1 motif is present at residues 115-117 (NPA). A helical membrane pass occupies residues 134–154 (LFYIVMQCLGAICGAGVVKGF). The Extracellular portion of the chain corresponds to 155–175 (QPGLYQTNGGGANVVAHGYTK). The chain crosses the membrane as a helical span at residues 176 to 196 (GSGLGAEIVGTFVLVYTVFSA). Topologically, residues 197-209 (TDAKRSARDSHVP) are cytoplasmic. The helical transmembrane segment at 210–230 (ILAPLPIGFAVFLVHLATIPI) threads the bilayer. The Extracellular portion of the chain corresponds to 231–257 (TGTGINPARSLGAAIIYNKDHAWDDHW). Residues 236–238 (NPA) carry the NPA 2 motif. A helical membrane pass occupies residues 258–278 (IFWVGPFIGAALAALYHQIVI). Over 279-287 (RAIPFKSKT) the chain is Cytoplasmic. S285 carries the phosphoserine modification.

The protein belongs to the MIP/aquaporin (TC 1.A.8) family. PIP (TC 1.A.8.11) subfamily. As to expression, predominantly expressed in green siliques. Also expressed above ground, in roots and flower buds.

The protein localises to the cell membrane. Aquaporins facilitate the transport of water and small neutral solutes across cell membranes. This is Probable aquaporin PIP1-5 (PIP1-5) from Arabidopsis thaliana (Mouse-ear cress).